The following is a 142-amino-acid chain: Hemoglobin subunit alpha (142 aa).

The 141-residue stretch at 2-142 (VLSPDDKKHV…VSTVLTSKYR (141 aa)) folds into the Globin domain. Ser4 is subject to Phosphoserine. Residues Lys8 and Lys12 each carry the N6-succinyllysine modification. Lys17 carries the N6-acetyllysine; alternate modification. N6-succinyllysine; alternate is present on Lys17. Tyr25 carries the phosphotyrosine modification. Ser36 carries the phosphoserine modification. Position 41 is an N6-succinyllysine (Lys41). The residue at position 50 (Ser50) is a Phosphoserine. An O2-binding site is contributed by His59. Heme b is bound at residue His88. Ser103 is subject to Phosphoserine. A Phosphothreonine modification is found at Thr109. Ser125 and Ser132 each carry phosphoserine. Phosphothreonine is present on residues Thr135 and Thr138. Phosphoserine is present on Ser139.

It belongs to the globin family. Heterotetramer of two alpha chains and two beta chains. In terms of tissue distribution, red blood cells.

Its function is as follows. Involved in oxygen transport from the lung to the various peripheral tissues. Hemopressin acts as an antagonist peptide of the cannabinoid receptor CNR1. Hemopressin-binding efficiently blocks cannabinoid receptor CNR1 and subsequent signaling. The chain is Hemoglobin subunit alpha (HBA) from Papio anubis (Olive baboon).